The sequence spans 198 residues: N-acetyltransferase 9-like protein (198 aa).

In terms of domain architecture, N-acetyltransferase spans 34-178; the sequence is EEIRRLTGSE…KEITMELPGE (145 aa).

The protein belongs to the acetyltransferase family. GNAT subfamily.

This chain is N-acetyltransferase 9-like protein, found in Caenorhabditis briggsae.